Consider the following 165-residue polypeptide: Transcription factor TCP16 (165 aa).

Residues 1–11 are compositionally biased toward polar residues; it reads MDSKNGINNSQ. Disordered regions lie at residues 1–21 and 146–165; these read MDSK…KDRH and GNAT…TTTV. Residues 12-21 show a composition bias toward basic residues; sequence KARRTPKDRH. Positions 17 to 71 constitute a TCP domain; sequence PKDRHLKIGGRDRRIRIPPSVAPQLFRLTKELGFKTDGETVSWLLQNAEPAIFAA. Positions 148-165 are enriched in low complexity; it reads ATASDTTSAATTTATTTV.

Mostly in anther in young buds.

It localises to the nucleus. In terms of biological role, required during early processes in pollen development. This Arabidopsis thaliana (Mouse-ear cress) protein is Transcription factor TCP16 (TCP16).